Reading from the N-terminus, the 206-residue chain is Probable N-acetyltransferase 14 (206 aa).

In terms of domain architecture, N-acetyltransferase spans Leu9–Ile206. Transmembrane regions (helical) follow at residues Leu37 to Gly57 and Phe60 to Leu80.

This sequence belongs to the camello family.

Its subcellular location is the membrane. Its function is as follows. Probable acetyltransferase. The polypeptide is Probable N-acetyltransferase 14 (nat14) (Xenopus tropicalis (Western clawed frog)).